Here is a 115-residue protein sequence, read N- to C-terminus: Large ribosomal subunit protein bL20 (115 aa).

Belongs to the bacterial ribosomal protein bL20 family.

Its function is as follows. Binds directly to 23S ribosomal RNA and is necessary for the in vitro assembly process of the 50S ribosomal subunit. It is not involved in the protein synthesizing functions of that subunit. In Synechococcus sp. (strain CC9311), this protein is Large ribosomal subunit protein bL20.